A 503-amino-acid chain; its full sequence is uncharacterized protein (503 aa).

It belongs to the Mg-chelatase subunits D/I family. ComM subfamily.

This is an uncharacterized protein from Mycobacterium tuberculosis (strain CDC 1551 / Oshkosh).